Here is a 519-residue protein sequence, read N- to C-terminus: GTPase Der (519 aa).

Composition is skewed to acidic residues over residues 1 to 12 (MDVEGAFADEEE) and 30 to 54 (GYED…PDFG). A disordered region spans residues 1 to 54 (MDVEGAFADEEELAPHGGWASADFDPAEFGYEDSDDDFDAEDFDETEFSNPDFG). 2 EngA-type G domains span residues 81-244 (CTVA…PEEP) and 254-427 (RRVA…DNWD). GTP is bound by residues 87-94 (GRPNVGKS), 134-138 (DTGGW), 196-199 (NKFD), 260-267 (GKPNVGKS), 307-311 (DTAGL), and 372-375 (NKWD). In terms of domain architecture, KH-like spans 428-510 (RRISTGQLNT…PVRIAVRVRE (83 aa)).

This sequence belongs to the TRAFAC class TrmE-Era-EngA-EngB-Septin-like GTPase superfamily. EngA (Der) GTPase family. Associates with the 50S ribosomal subunit.

Its function is as follows. GTPase that plays an essential role in the late steps of ribosome biogenesis. This is GTPase Der from Corynebacterium glutamicum (strain ATCC 13032 / DSM 20300 / JCM 1318 / BCRC 11384 / CCUG 27702 / LMG 3730 / NBRC 12168 / NCIMB 10025 / NRRL B-2784 / 534).